The primary structure comprises 363 residues: Small ribosomal subunit biogenesis GTPase RsgA (363 aa).

In terms of domain architecture, CP-type G spans 112–268; sequence HQQVIAANID…LIDTPGMREL (157 aa). Residues 157 to 160 and 210 to 218 each bind GTP; these read TKAD and GSSGAGKST. Residues cysteine 291, cysteine 296, histidine 298, and cysteine 304 each coordinate Zn(2+). Residues 340–363 are disordered; the sequence is RVAQNNRGKGSGKRPASVDRPGRR.

The protein belongs to the TRAFAC class YlqF/YawG GTPase family. RsgA subfamily. Monomer. Associates with 30S ribosomal subunit, binds 16S rRNA. The cofactor is Zn(2+).

Its subcellular location is the cytoplasm. In terms of biological role, one of several proteins that assist in the late maturation steps of the functional core of the 30S ribosomal subunit. Helps release RbfA from mature subunits. May play a role in the assembly of ribosomal proteins into the subunit. Circularly permuted GTPase that catalyzes slow GTP hydrolysis, GTPase activity is stimulated by the 30S ribosomal subunit. This chain is Small ribosomal subunit biogenesis GTPase RsgA, found in Xanthomonas euvesicatoria pv. vesicatoria (strain 85-10) (Xanthomonas campestris pv. vesicatoria).